The sequence spans 497 residues: 4,4'-diaponeurosporene oxygenase (497 aa).

7–19 (VIGGGLGGISAAI) serves as a coordination point for FAD.

This sequence belongs to the carotenoid/retinoid oxidoreductase family. CrtP subfamily. FAD is required as a cofactor.

It catalyses the reaction all-trans-4,4'-diaponeurosporene + 2 AH2 + 2 O2 = 4,4'-diaponeurosporenal + 2 A + 3 H2O. The protein operates within carotenoid biosynthesis; staphyloxanthin biosynthesis; staphyloxanthin from farnesyl diphosphate: step 3/5. Involved in the biosynthesis of the yellow-orange carotenoid staphyloxanthin, which plays a role in the virulence via its protective function against oxidative stress. Catalyzes the oxidation of the terminal methyl side group of 4,4'-diaponeurosporene to form 4,4'-diaponeurosporen-4-al. The protein is 4,4'-diaponeurosporene oxygenase of Staphylococcus aureus (strain bovine RF122 / ET3-1).